The sequence spans 515 residues: MTLPPPPSRLKPPRNTSSLSLRWRVMLLAMSMVAMVVVLMSVAVYAVVSRALYDDIDNQLHSRARLLIESGSLAADPGKAIEGTAYSDVNAMLVNPGRSIYTANQQGQTLPLGEAEKDVISGELLLSLRTANHQRILAVHLTNGSSLLISKSLAPTGQVLGRLGTVLLIVGGVGVAVAAIAGGMVARAGLRPVGRLTQAAERVARTDDLRPIPVFGSDELARLTEAFNMMLRALTESRERQARLVSDAGHELRTPLTSLRTNVELLMASQAPGAPRLPEEEMAGLRADVIAQIEELSTLVGDLVDLTRDEAGGVVYETVDMAEVVDRSLERVRRRRNDIEFDVNVVGWQVYGDAAGLARAVLNLLDNAAKWSPPGGRVGVRLTQTDPVHAELVVSDQGPGIPEAERRLVFERFYRSTAARAMPGSGLGLAIVKQVVLKHGGALRVEDTVPGGNPPGTSFYVMLPGRPLTPGGNGTAPVPAAQFDPDMRSAGSRADRRVIKNTETNGKSRSASKEL.

Residues 1 to 24 (MTLPPPPSRLKPPRNTSSLSLRWR) are Cytoplasmic-facing. Residues 25–45 (VMLLAMSMVAMVVVLMSVAVY) traverse the membrane as a helical segment. Residues 46 to 165 (AVVSRALYDD…TGQVLGRLGT (120 aa)) are Extracellular-facing. The helical transmembrane segment at 166–186 (VLLIVGGVGVAVAAIAGGMVA) threads the bilayer. The region spanning 187–239 (RAGLRPVGRLTQAAERVARTDDLRPIPVFGSDELARLTEAFNMMLRALTESRE) is the HAMP domain. At 187 to 515 (RAGLRPVGRL…GKSRSASKEL (329 aa)) the chain is on the cytoplasmic side. In terms of domain architecture, Histidine kinase spans 247–467 (DAGHELRTPL…SFYVMLPGRP (221 aa)). His-250 is subject to Phosphohistidine; by autocatalysis. The tract at residues 468–515 (LTPGGNGTAPVPAAQFDPDMRSAGSRADRRVIKNTETNGKSRSASKEL) is disordered.

Mg(2+) serves as cofactor. Mn(2+) is required as a cofactor. Post-translationally, autophosphorylated.

The protein localises to the cell membrane. It carries out the reaction ATP + protein L-histidine = ADP + protein N-phospho-L-histidine.. Member of the two-component regulatory system MprB/MprA which contributes to maintaining a balance among several systems involved in stress resistance and is required for establishment and maintenance of persistent infection in the host. In response to environmental signals MprB acts both as a membrane-associated protein kinase that undergoes autophosphorylation and subsequently transfers the phosphate to MprA, and a protein phosphatase that dephosphorylates phospho-MprA. This chain is Signal transduction histidine-protein kinase/phosphatase MprB (mprB), found in Mycobacterium sp. (strain KMS).